The sequence spans 321 residues: MARSKIALIGAGQIGGTLAHLAALKELGDIVLFDIAEGTPQGKALDLAESGPVEGFNASLKGANSYADIAGADVIIVTAGVPRKPGMSRDDLLGINLKVMDAVGGGIKQYAPDAFVICITNPLDAMVWALQKSSGLAPAKIVGMAGVLDSARFRYFLSEEFKVSVEDVTAFVLGGHGDDMVPSLRYSTVAGIPLTDLVKLGWTTQERLDAIVERTRKGGGEIVNLLKTGSAFYAPAASAIAMAEAYLKDKRRVLPCAAQLSGQYGVDNLYVGVPVVIGANGVEKIVEVTLDESEKAMFAKSVESVRGLVEACKVINPALAG.

NAD(+) is bound by residues 10 to 15 (GAGQIG) and Asp-34. Positions 83 and 89 each coordinate substrate. Residues Asn-96 and 119–121 (ITN) each bind NAD(+). Substrate is bound by residues Asn-121 and Arg-152. His-176 serves as the catalytic Proton acceptor.

This sequence belongs to the LDH/MDH superfamily. MDH type 3 family.

The catalysed reaction is (S)-malate + NAD(+) = oxaloacetate + NADH + H(+). Its function is as follows. Catalyzes the reversible oxidation of malate to oxaloacetate. The sequence is that of Malate dehydrogenase from Methylocella silvestris (strain DSM 15510 / CIP 108128 / LMG 27833 / NCIMB 13906 / BL2).